A 63-amino-acid polypeptide reads, in one-letter code: Cytochrome c oxidase subunit 7C, mitochondrial (63 aa).

Residues 1–16 (MLGQSIRRFTTSVVRR) constitute a mitochondrion transit peptide. The Mitochondrial matrix segment spans residues 17–33 (SHYEEGPGKNLPFSVEN). An N6-acetyllysine; alternate modification is found at Lys25. Lys25 bears the N6-succinyllysine; alternate mark. The helical transmembrane segment at 34–60 (KWSLLAKMCLYFGSAFATPFLVVRHQL) threads the bilayer. Topologically, residues 61-63 (LKT) are mitochondrial intermembrane.

It belongs to the cytochrome c oxidase VIIc family. Component of the cytochrome c oxidase (complex IV, CIV), a multisubunit enzyme composed of 14 subunits. The complex is composed of a catalytic core of 3 subunits MT-CO1, MT-CO2 and MT-CO3, encoded in the mitochondrial DNA, and 11 supernumerary subunits COX4I1 (or COX4I2), COX5A, COX5B, COX6A1 (or COX6A2), COX6B1 (or COX6B2), COX6C, COX7A2 (or COX7A1), COX7B, COX7C, COX8A and NDUFA4, which are encoded in the nuclear genome. The complex exists as a monomer or a dimer and forms supercomplexes (SCs) in the inner mitochondrial membrane with NADH-ubiquinone oxidoreductase (complex I, CI) and ubiquinol-cytochrome c oxidoreductase (cytochrome b-c1 complex, complex III, CIII), resulting in different assemblies (supercomplex SCI(1)III(2)IV(1) and megacomplex MCI(2)III(2)IV(2)). Interacts with RAB5IF.

It localises to the mitochondrion inner membrane. Its pathway is energy metabolism; oxidative phosphorylation. In terms of biological role, component of the cytochrome c oxidase, the last enzyme in the mitochondrial electron transport chain which drives oxidative phosphorylation. The respiratory chain contains 3 multisubunit complexes succinate dehydrogenase (complex II, CII), ubiquinol-cytochrome c oxidoreductase (cytochrome b-c1 complex, complex III, CIII) and cytochrome c oxidase (complex IV, CIV), that cooperate to transfer electrons derived from NADH and succinate to molecular oxygen, creating an electrochemical gradient over the inner membrane that drives transmembrane transport and the ATP synthase. Cytochrome c oxidase is the component of the respiratory chain that catalyzes the reduction of oxygen to water. Electrons originating from reduced cytochrome c in the intermembrane space (IMS) are transferred via the dinuclear copper A center (CU(A)) of subunit 2 and heme A of subunit 1 to the active site in subunit 1, a binuclear center (BNC) formed by heme A3 and copper B (CU(B)). The BNC reduces molecular oxygen to 2 water molecules using 4 electrons from cytochrome c in the IMS and 4 protons from the mitochondrial matrix. The chain is Cytochrome c oxidase subunit 7C, mitochondrial (COX7C) from Homo sapiens (Human).